The chain runs to 609 residues: Alpha-glycerophosphate oxidase (609 aa).

21 to 49 contributes to the FAD binding site; the sequence is DLLVIGGGITGAGLTLQAAAAGMKVAVLE.

Belongs to the FAD-dependent glycerol-3-phosphate dehydrogenase family. FAD serves as cofactor.

The protein localises to the cytoplasm. It carries out the reaction sn-glycerol 3-phosphate + O2 = dihydroxyacetone phosphate + H2O2. This chain is Alpha-glycerophosphate oxidase (glpO), found in Lactococcus lactis subsp. lactis (strain IL1403) (Streptococcus lactis).